The sequence spans 514 residues: Probable lysine--tRNA ligase, cytoplasmic (514 aa).

This sequence belongs to the class-II aminoacyl-tRNA synthetase family. As to quaternary structure, homodimer.

It localises to the cytoplasm. It carries out the reaction tRNA(Lys) + L-lysine + ATP = L-lysyl-tRNA(Lys) + AMP + diphosphate. This chain is Probable lysine--tRNA ligase, cytoplasmic, found in Vairimorpha ceranae (strain BRL01) (Microsporidian parasite).